A 64-amino-acid chain; its full sequence is Conotoxin reg3k (64 aa).

The first 20 residues, 1–20 (MMFKLGVLLTICLLLFPLTA), serve as a signal peptide directing secretion. A propeptide spanning residues 21–48 (LQLDWDQPGDHMLDISSEIDDRWFDPVR) is cleaved from the precursor. 3 disulfides stabilise this stretch: cysteine 50-cysteine 60, cysteine 51-cysteine 58, and cysteine 56-cysteine 61. Proline 59 is subject to 4-hydroxyproline.

In terms of tissue distribution, expressed by the venom duct.

The protein localises to the secreted. The sequence is that of Conotoxin reg3k from Conus regius (Crown cone).